Reading from the N-terminus, the 514-residue chain is MKYRDLRDFLAQLERQGELKRITAPVSTRLEMTEIADRVLRAGGPALLFENARHNDAPADMPVLANLFGTPRRVAWGMGADDVGALRETGELLASLREPEAPKGLRDALAKVSMLKAALWDMSPKTVRSAACQEIVWEGADVDLGRLPIQTCWPGDVAPLLAWGLVITRGPNARRQNLGIYRQQPLGPNKLIMRWLSHRGGALDFRDHAQAHPGKPFPIAVALGADPATILGAVTPVPDTLSEYQFAGLLRGSRTEVVKALGSDLSVPASAEIVLEGHLLPADDPRAVAAAVPEGANPPPATGYEMALEGPYGDHTGYYNEQDWFPVFTVDRITMRRNPIYHSTYTGKPPDEPAVLGVALNEVFVPLLRRQLPEIVDFYLPPEGCSYRLAVVSIRKQYAGHAKRVMFGLWSVLRQFMYTKFIVVVDEDIDPRDWTEVVWAMTTRMDPVRDTVLVENTPIDYLDFASPVSGLGGKMGLDATNKWPGETSREWGTPIHMDEAVKRRVDAMWDTLGL.

Asn-177 contributes to the Mn(2+) binding site. Prenylated FMN is bound by residues 180–182, 194–196, and 199–200; these read IYR, RWL, and RG. Residue Glu-243 coordinates Mn(2+). The active-site Proton donor is the Asp-314.

It belongs to the UbiD family. As to quaternary structure, homohexamer. The cofactor is prenylated FMN. Mn(2+) serves as cofactor.

It is found in the cell membrane. It carries out the reaction a 4-hydroxy-3-(all-trans-polyprenyl)benzoate + H(+) = a 2-(all-trans-polyprenyl)phenol + CO2. The protein operates within cofactor biosynthesis; ubiquinone biosynthesis. In terms of biological role, catalyzes the decarboxylation of 3-octaprenyl-4-hydroxy benzoate to 2-octaprenylphenol, an intermediate step in ubiquinone biosynthesis. This is 3-octaprenyl-4-hydroxybenzoate carboxy-lyase from Bordetella bronchiseptica (strain ATCC BAA-588 / NCTC 13252 / RB50) (Alcaligenes bronchisepticus).